The sequence spans 385 residues: MGRLFQLQEYCLRAMGHKDDMDSTDSTALSLKHISSLIFVISAQYPLISYVAYNRNDMEKVTACLSVVFTNMLTVIKISTFLANRKDFWEMIHRFRKMHEQSASHIPRYREGLDYVAEANKLASFLGRAYCVSCGLTGLYFMLGPIVKIGVCRWHGTTCDKELPMPMKFPFNDLESPGYEVCFLYTVLVTVVVVAYASAVDGLFISFAINLRAHFQTLQRQIENWEFPSSEPDTQIRLKSIVEYHVLLLSLSRKLRSIYTPTVMGQFVITSLQVGVIIYQLVTNMDSVMDLLLYASFFGSIMLQLFIYCYGGEIIKAESLQVDTAVRLSNWHLASPKTRTSLSLIILQSQKEVLIRAGFFVASLANFVGICRTALSLITLIKSIE.

The Cytoplasmic portion of the chain corresponds to Met1–Lys32. The chain crosses the membrane as a helical span at residues His33–Tyr53. Residues Asn54–Thr62 are Extracellular-facing. Residues Ala63–Ala83 form a helical membrane-spanning segment. Residues Asn84–Cys131 are Cytoplasmic-facing. The chain crosses the membrane as a helical span at residues Val132–Cys152. Residues Arg153–Thr186 lie on the Extracellular side of the membrane. Residues Val187–Phe207 form a helical membrane-spanning segment. At Ala208–Ser257 the chain is on the cytoplasmic side. Residues Ile258–Ile278 form a helical membrane-spanning segment. Topologically, residues Tyr279 to Asp290 are extracellular. The helical transmembrane segment at Leu291–Gly311 threads the bilayer. The Cytoplasmic portion of the chain corresponds to Gly312 to Ala357. A helical transmembrane segment spans residues Gly358–Ile378. Topologically, residues Thr379 to Glu385 are extracellular.

The protein belongs to the insect chemoreceptor superfamily. Heteromeric odorant receptor channel (TC 1.A.69) family. Or1a subfamily. In terms of assembly, interacts with Orco. Complexes exist early in the endomembrane system in olfactory sensory neurons (OSNs), coupling these complexes to the conserved ciliary trafficking pathway. Expressed in olfactory sensory neurons in the antenna.

The protein localises to the cell membrane. Its function is as follows. Odorant receptor which mediates acceptance or avoidance behavior, depending on its substrates. The odorant receptor repertoire encodes a large collection of odor stimuli that vary widely in identity, intensity, and duration. May form a complex with Orco to form odorant-sensing units, providing sensitive and prolonged odorant signaling and calcium permeability. This is Odorant receptor 82a (Or82a) from Drosophila melanogaster (Fruit fly).